The sequence spans 182 residues: Putative manganese efflux pump MntP 2 (182 aa).

6 helical membrane passes run 2-22 (IELTALAIALSMDAVAVSIAL), 37-57 (AGGFFGVAQMVMPLLGFYLGV), 63-83 (IGGIHHWVALGVLGFLGLKMI), 104-123 (LLLLAFVTSLDAMAAGLTLT), 127-149 (LPLWFCLLFIGGSTFLLSFGGVH), and 162-182 (AEYLGGIILILIGVKIFIEHS).

This sequence belongs to the MntP (TC 9.B.29) family.

It localises to the cell inner membrane. Functionally, probably functions as a manganese efflux pump. This is Putative manganese efflux pump MntP 2 from Wolinella succinogenes (strain ATCC 29543 / DSM 1740 / CCUG 13145 / JCM 31913 / LMG 7466 / NCTC 11488 / FDC 602W) (Vibrio succinogenes).